The chain runs to 185 residues: Large ribosomal subunit protein uL5m (185 aa).

The protein belongs to the universal ribosomal protein uL5 family. In terms of assembly, component of the mitochondrial ribosome large subunit.

It localises to the mitochondrion. This chain is Large ribosomal subunit protein uL5m (RPL5), found in Arabidopsis thaliana (Mouse-ear cress).